A 347-amino-acid polypeptide reads, in one-letter code: Eukaryotic translation initiation factor 3 subunit H (347 aa).

Positions 1–142 constitute an MPN domain; it reads MKIMKHCSQT…LRAFRLSPRF (142 aa).

Belongs to the eIF-3 subunit H family. Component of the eukaryotic translation initiation factor 3 (eIF-3) complex.

Its subcellular location is the cytoplasm. Functionally, component of the eukaryotic translation initiation factor 3 (eIF-3) complex, which is involved in protein synthesis of a specialized repertoire of mRNAs and, together with other initiation factors, stimulates binding of mRNA and methionyl-tRNAi to the 40S ribosome. The eIF-3 complex specifically targets and initiates translation of a subset of mRNAs involved in cell proliferation. The protein is Eukaryotic translation initiation factor 3 subunit H of Neosartorya fischeri (strain ATCC 1020 / DSM 3700 / CBS 544.65 / FGSC A1164 / JCM 1740 / NRRL 181 / WB 181) (Aspergillus fischerianus).